Here is a 342-residue protein sequence, read N- to C-terminus: Fructose-1,6-bisphosphatase class 1 (342 aa).

Mg(2+)-binding residues include glutamate 97, aspartate 119, leucine 121, and aspartate 122. Residues 122 to 125 (DGSS), asparagine 215, tyrosine 247, and lysine 280 each bind substrate. Glutamate 286 lines the Mg(2+) pocket.

Belongs to the FBPase class 1 family. As to quaternary structure, homotetramer. Requires Mg(2+) as cofactor.

The protein localises to the cytoplasm. The catalysed reaction is beta-D-fructose 1,6-bisphosphate + H2O = beta-D-fructose 6-phosphate + phosphate. Its pathway is carbohydrate biosynthesis; gluconeogenesis. This Leptospira borgpetersenii serovar Hardjo-bovis (strain JB197) protein is Fructose-1,6-bisphosphatase class 1.